Here is a 240-residue protein sequence, read N- to C-terminus: uncharacterized protein (240 aa).

Positions 216–240 are disordered; it reads MKQSKNKPRIRQAVGATRQCRKPQA.

This is an uncharacterized protein from Escherichia coli (strain K12).